The chain runs to 550 residues: Selinene synthase (550 aa).

Residues aspartate 314, aspartate 318, aspartate 450, and glutamate 458 each coordinate Mg(2+). Positions 314 to 318 (DDIYD) match the DDXXD motif motif.

This sequence belongs to the terpene synthase family. Mg(2+) is required as a cofactor. Mn(2+) serves as cofactor.

The catalysed reaction is (2E,6E)-farnesyl diphosphate = (+)-beta-selinene + diphosphate. It catalyses the reaction (2E,6E)-farnesyl diphosphate = alpha-selinene + diphosphate. It participates in secondary metabolite biosynthesis; terpenoid biosynthesis. Sesquiterpene synthase that catalyzes the formation of alpha- and beta-selinene from trans,trans-farnesyl diphosphate (FPP). Also produces some nerolidol. This is Selinene synthase (SES) from Ocimum basilicum (Sweet basil).